Here is a 98-residue protein sequence, read N- to C-terminus: Small proline-rich protein 2B (98 aa).

Tandem repeats lie at residues 21 to 29, 30 to 38, 39 to 47, 48 to 56, and 57 to 65. Positions 21-65 are 5 X 9 AA approximate tandem repeats; it reads PKCPEPCPPPKCPEPCPPPVCCEPCPPPKCPEPCPPPVCCEPCPP.

Belongs to the cornifin (SPRR) family. Expressed in uterus.

It localises to the cytoplasm. Cross-linked envelope protein of keratinocytes. It is a keratinocyte protein that first appears in the cell cytosol, but ultimately becomes cross-linked to membrane proteins by transglutaminase. All that results in the formation of an insoluble envelope beneath the plasma membrane. The sequence is that of Small proline-rich protein 2B (Sprr2b) from Mus musculus (Mouse).